The chain runs to 241 residues: Homeobox protein TGIF2LX (241 aa).

Disordered regions lie at residues 1–56 (MEAA…PKGY) and 115–213 (RHGN…EYPD). Residues 21-39 (AKTQSPAQDTSTVSRNSAD) show a composition bias toward polar residues. Positions 48–111 (EHTKKPKGYL…INARRRILPD (64 aa)) form a DNA-binding region, homeobox; TALE-type.

Belongs to the TALE/TGIF homeobox family.

It is found in the nucleus. Functionally, may have a transcription role in testis. The chain is Homeobox protein TGIF2LX (TGIF2LX) from Hylobates lar (Lar gibbon).